We begin with the raw amino-acid sequence, 822 residues long: Cation/H(+) antiporter 3 (822 aa).

12 helical membrane-spanning segments follow: residues 55 to 75 (FPHL…LHFF), 116 to 136 (EIVF…LMGV), 150 to 170 (AITI…VIFF), 190 to 210 (YVVI…NLLF), 224 to 244 (ISSA…LIFM), 274 to 294 (IVVL…FYII), 305 to 325 (AIYL…ANWC), 331 to 351 (MGPF…SAII), 362 to 382 (FLPF…LFGW), 388 to 408 (IILI…VPAL), 418 to 438 (FALS…YALA), and 447 to 467 (ETFT…PPIL).

Belongs to the monovalent cation:proton antiporter 2 (CPA2) transporter (TC 2.A.37) family. CHX (TC 2.A.37.4) subfamily.

It is found in the membrane. Functionally, may operate as a cation/H(+) antiporter. The polypeptide is Cation/H(+) antiporter 3 (CHX3) (Arabidopsis thaliana (Mouse-ear cress)).